The primary structure comprises 363 residues: uncharacterized protein (363 aa).

29-36 (GSINSGKT) provides a ligand contact to ATP.

It belongs to the archaeal ATPase family.

This is an uncharacterized protein from Methanocaldococcus jannaschii (strain ATCC 43067 / DSM 2661 / JAL-1 / JCM 10045 / NBRC 100440) (Methanococcus jannaschii).